Reading from the N-terminus, the 160-residue chain is Ribosomal RNA large subunit methyltransferase H (160 aa).

Residues Leu-76, Gly-108, and Leu-127–Trp-132 contribute to the S-adenosyl-L-methionine site.

It belongs to the RNA methyltransferase RlmH family. In terms of assembly, homodimer.

It is found in the cytoplasm. It carries out the reaction pseudouridine(1915) in 23S rRNA + S-adenosyl-L-methionine = N(3)-methylpseudouridine(1915) in 23S rRNA + S-adenosyl-L-homocysteine + H(+). Its function is as follows. Specifically methylates the pseudouridine at position 1915 (m3Psi1915) in 23S rRNA. The polypeptide is Ribosomal RNA large subunit methyltransferase H (Rhizobium johnstonii (strain DSM 114642 / LMG 32736 / 3841) (Rhizobium leguminosarum bv. viciae)).